A 141-amino-acid polypeptide reads, in one-letter code: Auxin-responsive protein SAUR62 (141 aa).

Belongs to the ARG7 family. In terms of tissue distribution, expressed in stamen filaments and petals.

Its subcellular location is the cell membrane. In terms of biological role, may promote auxin-stimulated organ elongation, such as hypocotyls, stamen filaments and petals. In Arabidopsis thaliana (Mouse-ear cress), this protein is Auxin-responsive protein SAUR62.